We begin with the raw amino-acid sequence, 284 residues long: Bifunctional protein FolD (284 aa).

NADP(+)-binding positions include 166-168 (GAS) and isoleucine 232.

It belongs to the tetrahydrofolate dehydrogenase/cyclohydrolase family. As to quaternary structure, homodimer.

It catalyses the reaction (6R)-5,10-methylene-5,6,7,8-tetrahydrofolate + NADP(+) = (6R)-5,10-methenyltetrahydrofolate + NADPH. The catalysed reaction is (6R)-5,10-methenyltetrahydrofolate + H2O = (6R)-10-formyltetrahydrofolate + H(+). Its pathway is one-carbon metabolism; tetrahydrofolate interconversion. Its function is as follows. Catalyzes the oxidation of 5,10-methylenetetrahydrofolate to 5,10-methenyltetrahydrofolate and then the hydrolysis of 5,10-methenyltetrahydrofolate to 10-formyltetrahydrofolate. The sequence is that of Bifunctional protein FolD from Shewanella sp. (strain MR-7).